The sequence spans 434 residues: Glutamate-1-semialdehyde 2,1-aminomutase (434 aa).

K267 carries the N6-(pyridoxal phosphate)lysine modification.

The protein belongs to the class-III pyridoxal-phosphate-dependent aminotransferase family. HemL subfamily. As to quaternary structure, homodimer. It depends on pyridoxal 5'-phosphate as a cofactor.

The protein resides in the cytoplasm. It catalyses the reaction (S)-4-amino-5-oxopentanoate = 5-aminolevulinate. It participates in porphyrin-containing compound metabolism; protoporphyrin-IX biosynthesis; 5-aminolevulinate from L-glutamyl-tRNA(Glu): step 2/2. It functions in the pathway porphyrin-containing compound metabolism; chlorophyll biosynthesis. The sequence is that of Glutamate-1-semialdehyde 2,1-aminomutase from Roseiflexus castenholzii (strain DSM 13941 / HLO8).